The chain runs to 285 residues: RNA polymerase sigma factor RpoH (285 aa).

The interval 53 to 122 is sigma-70 factor domain-2; sequence LILSHLRFVI…IHEYVLRNWR (70 aa). Positions 77 to 80 match the Interaction with polymerase core subunit RpoC motif; it reads DLIQ. Residues 229-281 are sigma-70 factor domain-4; the sequence is ALLRLDERSRNIIRARWLDKKEKNTLQKIANNYGISAERVRQLEKNAMKKLKI. The H-T-H motif DNA-binding region spans 254–273; that stretch reads LQKIANNYGISAERVRQLEK.

Belongs to the sigma-70 factor family. RpoH subfamily. Interacts with the RNA polymerase core enzyme.

Its subcellular location is the cytoplasm. Its function is as follows. Sigma factors are initiation factors that promote the attachment of RNA polymerase to specific initiation sites and are then released. This sigma factor is involved in regulation of expression of heat shock genes. In Buchnera aphidicola subsp. Schizaphis graminum (strain Sg), this protein is RNA polymerase sigma factor RpoH.